A 176-amino-acid chain; its full sequence is Nuclear transcription factor Y subunit B-10 (176 aa).

A compositionally biased stretch (gly residues) spans 1–15; sequence MAESQTGGGGGGSHE. Residues 1–29 form a disordered region; sequence MAESQTGGGGGGSHESGGDQSPRSLNVRE. Residue Ala-2 is modified to N-acetylalanine. Residues 34 to 40 mediate DNA binding; sequence LPIANIS. The segment at 61 to 72 is subunit association domain (SAD); the sequence is MQECVSEFISFV. The disordered stretch occupies residues 121 to 176; sequence GDTKGSGKGGESSAKRDGQPSQVSQFSQVPQQGSFSQGPYGNSQGSNMMVQMPGTE. Residues 139–159 show a composition bias toward low complexity; that stretch reads QPSQVSQFSQVPQQGSFSQGP. Residues 160–169 are compositionally biased toward polar residues; it reads YGNSQGSNMM.

It belongs to the NFYB/HAP3 subunit family. Heterotrimeric transcription factor composed of three components, NF-YA, NF-YB and NF-YC. NF-YB and NF-YC must interact and dimerize for NF-YA association and DNA binding. As to expression, expressed in the whole plant, except roots.

It is found in the nucleus. In terms of biological role, component of the NF-Y/HAP transcription factor complex. The NF-Y complex stimulates the transcription of various genes by recognizing and binding to a CCAAT motif in promoters. This is Nuclear transcription factor Y subunit B-10 (NFYB10) from Arabidopsis thaliana (Mouse-ear cress).